The chain runs to 312 residues: L-lactate dehydrogenase (312 aa).

NAD(+) is bound by residues Val14, Asp35, and Tyr66. Substrate contacts are provided by residues Gln83, Arg90, and 122 to 125 (NPVD). NAD(+) is bound by residues 120–122 (ASN) and Ser145. 150–153 (DSAR) is a binding site for substrate. His177 serves as the catalytic Proton acceptor. Tyr220 is modified (phosphotyrosine). Thr229 contacts substrate.

It belongs to the LDH/MDH superfamily. LDH family. Homotetramer.

Its subcellular location is the cytoplasm. It catalyses the reaction (S)-lactate + NAD(+) = pyruvate + NADH + H(+). Its pathway is fermentation; pyruvate fermentation to lactate; (S)-lactate from pyruvate: step 1/1. Its function is as follows. Catalyzes the conversion of lactate to pyruvate. The polypeptide is L-lactate dehydrogenase (Mycoplasma pneumoniae (strain ATCC 29342 / M129 / Subtype 1) (Mycoplasmoides pneumoniae)).